We begin with the raw amino-acid sequence, 360 residues long: DNA polymerase IV (360 aa).

Residues 8-191 (VLHVDMDSFF…LPVGRIPGIG (184 aa)) form the UmuC domain. D12 and D110 together coordinate Mg(2+). Residue E111 is part of the active site.

The protein belongs to the DNA polymerase type-Y family. As to quaternary structure, monomer. The cofactor is Mg(2+).

It localises to the cytoplasm. The catalysed reaction is DNA(n) + a 2'-deoxyribonucleoside 5'-triphosphate = DNA(n+1) + diphosphate. Functionally, poorly processive, error-prone DNA polymerase involved in untargeted mutagenesis. Copies undamaged DNA at stalled replication forks, which arise in vivo from mismatched or misaligned primer ends. These misaligned primers can be extended by PolIV. Exhibits no 3'-5' exonuclease (proofreading) activity. May be involved in translesional synthesis. The protein is DNA polymerase IV of Methanoculleus marisnigri (strain ATCC 35101 / DSM 1498 / JR1).